The primary structure comprises 461 residues: Bifunctional protein GlmU (461 aa).

The pyrophosphorylase stretch occupies residues 1–232 (MNLQIIILAA…SFEVQGINNR (232 aa)). Residues 8–11 (LAAG), K22, Q73, and 78–79 (GT) each bind UDP-N-acetyl-alpha-D-glucosamine. D102 provides a ligand contact to Mg(2+). Residues G142, E157, and N230 each coordinate UDP-N-acetyl-alpha-D-glucosamine. N230 lines the Mg(2+) pocket. The linker stretch occupies residues 233–253 (QQLQQLERTWQQRAANQLMEK). The tract at residues 254–461 (GATLADANRF…WKRPVKRERD (208 aa)) is N-acetyltransferase. UDP-N-acetyl-alpha-D-glucosamine is bound by residues R336 and K354. Catalysis depends on H366, which acts as the Proton acceptor. Residues Y369 and N380 each coordinate UDP-N-acetyl-alpha-D-glucosamine. Acetyl-CoA-binding positions include A383, 389–390 (NY), S408, and A426.

It in the N-terminal section; belongs to the N-acetylglucosamine-1-phosphate uridyltransferase family. The protein in the C-terminal section; belongs to the transferase hexapeptide repeat family. As to quaternary structure, homotrimer. The cofactor is Mg(2+).

The protein resides in the cytoplasm. It carries out the reaction alpha-D-glucosamine 1-phosphate + acetyl-CoA = N-acetyl-alpha-D-glucosamine 1-phosphate + CoA + H(+). The catalysed reaction is N-acetyl-alpha-D-glucosamine 1-phosphate + UTP + H(+) = UDP-N-acetyl-alpha-D-glucosamine + diphosphate. It participates in nucleotide-sugar biosynthesis; UDP-N-acetyl-alpha-D-glucosamine biosynthesis; N-acetyl-alpha-D-glucosamine 1-phosphate from alpha-D-glucosamine 6-phosphate (route II): step 2/2. The protein operates within nucleotide-sugar biosynthesis; UDP-N-acetyl-alpha-D-glucosamine biosynthesis; UDP-N-acetyl-alpha-D-glucosamine from N-acetyl-alpha-D-glucosamine 1-phosphate: step 1/1. It functions in the pathway bacterial outer membrane biogenesis; LPS lipid A biosynthesis. Catalyzes the last two sequential reactions in the de novo biosynthetic pathway for UDP-N-acetylglucosamine (UDP-GlcNAc). The C-terminal domain catalyzes the transfer of acetyl group from acetyl coenzyme A to glucosamine-1-phosphate (GlcN-1-P) to produce N-acetylglucosamine-1-phosphate (GlcNAc-1-P), which is converted into UDP-GlcNAc by the transfer of uridine 5-monophosphate (from uridine 5-triphosphate), a reaction catalyzed by the N-terminal domain. The protein is Bifunctional protein GlmU of Legionella pneumophila (strain Paris).